The sequence spans 228 residues: Peptide deformylase (228 aa).

Disordered regions lie at residues 1-28 (MSQD…EGAV) and 116-138 (GVPK…EPDR). Composition is skewed to polar residues over residues 8-18 (TGCNTHSNTHS) and 123-133 (NKQQANNSTSC). Residues Cys141 and His183 each contribute to the Fe cation site. Glu184 is an active-site residue. Fe cation is bound at residue His187.

The protein belongs to the polypeptide deformylase family. Fe(2+) serves as cofactor.

The catalysed reaction is N-terminal N-formyl-L-methionyl-[peptide] + H2O = N-terminal L-methionyl-[peptide] + formate. Removes the formyl group from the N-terminal Met of newly synthesized proteins. Requires at least a dipeptide for an efficient rate of reaction. N-terminal L-methionine is a prerequisite for activity but the enzyme has broad specificity at other positions. This Tropheryma whipplei (strain Twist) (Whipple's bacillus) protein is Peptide deformylase.